We begin with the raw amino-acid sequence, 240 residues long: MSTLLHIDSSVRAVSNTNPDHNSISKSIALRFIETWKQHRPQDEYIYRDVGVNPPDFINQDWVGAVFTPDDKRTPEQKERLALSDKLIDEVSAADVIVISSPMYNYGMPAQLKAWFDQIVRINKTFDFDLSRGDFPLQPILSGKTLITVTSSGEFGFEKGGVREGSGHLAPHLRTLSKYLGVDTMYEIVSEYQEFGDDRHRVSVANAKDRAECLASELSLSTTDSLLKSDSVGSDLGITP.

FMN-binding positions include S10 and 23–25; that span reads SIS.

It belongs to the azoreductase type 1 family. As to quaternary structure, homodimer. The cofactor is FMN.

The catalysed reaction is 2 a quinone + NADH + H(+) = 2 a 1,4-benzosemiquinone + NAD(+). It catalyses the reaction N,N-dimethyl-1,4-phenylenediamine + anthranilate + 2 NAD(+) = 2-(4-dimethylaminophenyl)diazenylbenzoate + 2 NADH + 2 H(+). Quinone reductase that provides resistance to thiol-specific stress caused by electrophilic quinones. In terms of biological role, also exhibits azoreductase activity. Catalyzes the reductive cleavage of the azo bond in aromatic azo compounds to the corresponding amines. The polypeptide is FMN-dependent NADH:quinone oxidoreductase 2 (Idiomarina loihiensis (strain ATCC BAA-735 / DSM 15497 / L2-TR)).